Here is a 229-residue protein sequence, read N- to C-terminus: Coiled-coil domain-containing protein 134 (229 aa).

The first 22 residues, 1–22 (MDLLQFLAAFSVLLWPGTEVTG), serve as a signal peptide directing secretion. Asparagine 148 carries an N-linked (GlcNAc...) asparagine glycan. The segment at 182–229 (FKTDQTEFIPSTDPFQKALREEEKRRKKEERRKEIRKGPRISRSQSEL) is disordered. Positions 196 to 218 (FQKALREEEKRRKKEERRKEIRK) form a coiled coil. A Prevents secretion from ER motif is present at residues 226–229 (QSEL).

Belongs to the CCDC134 family. In terms of assembly, interacts with TADA2A. Associates with the PCAF complex via TADA2A binding. Post-translationally, O-glycosylated, with additional sialic acid modifications.

The protein resides in the endoplasmic reticulum lumen. It is found in the secreted. Its subcellular location is the cytoplasm. The protein localises to the nucleus. Its function is as follows. Molecular adapter required to prevent protein hyperglycosylation of HSP90B1: during translation, associates with nascent HSP90B1 and the STT3A catalytic component of the OST-A complex and tethers them to a specialized translocon that forms a microenvironment for HSP90B1 folding. In the CCDC134-containing translocon, STT3A associates with the SRT pseudosubstrate motif of HSP90B1, preventing access to facultative glycosylation sites until folding is completed, preventing hyperglycosylation and subsequent degradation of HSP90B1. In extracellular secreted form, promotes proliferation and activation of CD8(+) T-cells, suggesting a cytokine-like function. May inhibit ERK and JNK signaling activity. May suppress cell migration and invasion activity, via its effects on ERK and JNK signaling. May also localize in the nucleus: enhances stability of the PCAF histone acetyltransferase (HAT) complex member TADA2A and thus promotes PCAF-mediated histone acetyltransferase activity. Has a critical role in the regulation of osteogenesis and bone development. The chain is Coiled-coil domain-containing protein 134 (Ccdc134) from Mus musculus (Mouse).